We begin with the raw amino-acid sequence, 1126 residues long: Protein translocase subunit SecA (1126 aa).

ATP is bound by residues Gln175, 193–197 (GEGKT), and Asp694. The disordered stretch occupies residues 1060 to 1126 (VQEAAPEKHE…KYKNCHGQGL (67 aa)). Residues 1064–1080 (APEKHEDMSRYRTEKTD) are compositionally biased toward basic and acidic residues. 4 residues coordinate Zn(2+): Cys1110, Cys1112, Cys1121, and His1122.

The protein belongs to the SecA family. In terms of assembly, monomer and homodimer. Part of the essential Sec protein translocation apparatus which comprises SecA, SecYEG and auxiliary proteins SecDF. Other proteins may also be involved. The cofactor is Zn(2+).

It is found in the cell inner membrane. It localises to the cytoplasm. The catalysed reaction is ATP + H2O + cellular proteinSide 1 = ADP + phosphate + cellular proteinSide 2.. Its function is as follows. Part of the Sec protein translocase complex. Interacts with the SecYEG preprotein conducting channel. Has a central role in coupling the hydrolysis of ATP to the transfer of proteins into and across the cell membrane, serving as an ATP-driven molecular motor driving the stepwise translocation of polypeptide chains across the membrane. The sequence is that of Protein translocase subunit SecA from Parabacteroides distasonis (strain ATCC 8503 / DSM 20701 / CIP 104284 / JCM 5825 / NCTC 11152).